The following is a 32-amino-acid chain: MESIRWLLTVAQFDFDMKLVQSXAIVNYVANK.

21 to 22 (QS) provides a ligand contact to glutathione.

This sequence belongs to the GST superfamily. Alpha family. As to quaternary structure, homodimer. The N-terminus is blocked.

It is found in the cytoplasm. It catalyses the reaction RX + glutathione = an S-substituted glutathione + a halide anion + H(+). Its function is as follows. Conjugation of reduced glutathione to a wide number of exogenous and endogenous hydrophobic electrophiles. This is Glutathione S-transferase 8.2 from Dicentrarchus labrax (European seabass).